Reading from the N-terminus, the 593-residue chain is Vitamin H transporter (593 aa).

Over 1-121 (MTISNKSWRS…TTQTKAERRL (121 aa)) the chain is Extracellular. Phosphoserine is present on residues serine 32, serine 33, and serine 43. A helical membrane pass occupies residues 122-142 (LYKLDIIIALYFFMLCWSKSV). Residues 143-166 (DLNNYTNAYVSNMKEDLNMKGNDY) lie on the Cytoplasmic side of the membrane. A helical transmembrane segment spans residues 167–187 (VYTSTIANVGAIVFQLPFMYL). Residues 188-190 (LPR) are Extracellular-facing. A helical transmembrane segment spans residues 191–211 (FPSHIILPVMDLGWTWFTFAC). Topologically, residues 212–224 (YRANSLAELRAYR) are cytoplasmic. Residues 225–245 (FILSAFGAAYYPVSQYILGCW) form a helical membrane-spanning segment. Residues 246-291 (YAPDEINSRVCLFFCGQQLGSVTSGLLQSRIFKSLNGVHGLAGWRW) lie on the Extracellular side of the membrane. Residues 292–312 (MFLIDAIAISLPTAIIGFFVI) form a helical membrane-spanning segment. Topologically, residues 313–361 (PGVPSKCYSLFLTDEEIRIARARNKRNQIKDGVDKSKLAPLWSRKLWKK) are cytoplasmic. Residues 362-382 (VFCTPAFWVLVVFDTCSWNNM) form a helical membrane-spanning segment. Over 383 to 408 (TAYSGSYTLWLKSNTKYSIAQVNNLS) the chain is Extracellular. Residues 409–429 (VIPACLGFAYVIFCAFGADLF) form a helical membrane-spanning segment. The Cytoplasmic portion of the chain corresponds to 430-432 (RCK). The helical transmembrane segment at 433–453 (WIFMVFAAIMNTVSCALLIKW) threads the bilayer. Over 454–460 (DIPSKAK) the chain is Extracellular. A helical membrane pass occupies residues 461-481 (WYAFFTTYFSVAASPCLWSFI). Over 482 to 492 (NDFLRFDPQVK) the chain is Cytoplasmic. Residues 493–513 (AITWIAIYSFSQSTYAWIPTL) traverse the membrane as a helical segment. Topologically, residues 514-526 (AWPTVESPRFKTG) are extracellular. Residues 527–547 (YTVSLIFGAIYGLWTFVVLFF) traverse the membrane as a helical segment. Residues 548-593 (YKRNEKKHALGNGIILYDSNKGEELPEFVKKNMEERDGYYYLKRSS) lie on the Cytoplasmic side of the membrane.

This sequence belongs to the major facilitator superfamily. Allantoate permease family.

It localises to the cell membrane. Involved in uptake of biotin with the concomitant entry of protons. The sequence is that of Vitamin H transporter (VHT1) from Saccharomyces cerevisiae (strain ATCC 204508 / S288c) (Baker's yeast).